A 37-amino-acid polypeptide reads, in one-letter code: Large ribosomal subunit protein bL36 (37 aa).

This sequence belongs to the bacterial ribosomal protein bL36 family.

The polypeptide is Large ribosomal subunit protein bL36 (Koribacter versatilis (strain Ellin345)).